The chain runs to 353 residues: Tetrahedral aminopeptidase (353 aa).

2 residues coordinate Zn(2+): histidine 68 and aspartate 182. The active-site Proton acceptor is the glutamate 212. Zn(2+) contacts are provided by glutamate 213, aspartate 235, and histidine 323.

This sequence belongs to the peptidase M42 family. As to quaternary structure, homododecamer. The assembly of six dimers results in a tetrahedral-shaped structure; all 12 active sites are located on the inside of the tetrahedron. Substrate access is granted by four pores with a maximal diameter of 18 Angstroms, allowing only small peptides and unfolded proteins access to the active site. Beside the four entry ports, TET contains 12 small product release openings, which are large enough to allow passage of only single amino acid residues. The cofactor is Zn(2+). Requires Co(2+) as cofactor.

With respect to regulation, inhibited by EDTA and bestatin in vitro. Is insensitive to papain, antipain, chymostatin, leupeptin, pepstatin and aprotinin. Functionally, functions as an aminopeptidase, with a clear preference for leucine as the N-terminal amino acid. However, can also cleave moderately long polypeptide substrates of various compositions in a fairly unspecific manner. Has neither carboxypeptidase nor endoproteolytic activities, and it is devoid of N-terminal deblocking activity. Is involved in protein degradation, performing degradation of oligopeptides produced by the proteasome into single amino acids. This chain is Tetrahedral aminopeptidase (frvX), found in Pyrococcus horikoshii (strain ATCC 700860 / DSM 12428 / JCM 9974 / NBRC 100139 / OT-3).